The sequence spans 654 residues: tRNA 5-methylaminomethyl-2-thiouridine biosynthesis bifunctional protein MnmC (654 aa).

A tRNA (mnm(5)s(2)U34)-methyltransferase region spans residues 1–235 (MSDFQHAQLD…KREMLGGTYQ (235 aa)). The segment at 261–654 (VGGGLAGCAS…LRDLVRGQRG (394 aa)) is FAD-dependent cmnm(5)s(2)U34 oxidoreductase.

In the N-terminal section; belongs to the methyltransferase superfamily. tRNA (mnm(5)s(2)U34)-methyltransferase family. It in the C-terminal section; belongs to the DAO family. The cofactor is FAD.

The protein resides in the cytoplasm. The enzyme catalyses 5-aminomethyl-2-thiouridine(34) in tRNA + S-adenosyl-L-methionine = 5-methylaminomethyl-2-thiouridine(34) in tRNA + S-adenosyl-L-homocysteine + H(+). Its function is as follows. Catalyzes the last two steps in the biosynthesis of 5-methylaminomethyl-2-thiouridine (mnm(5)s(2)U) at the wobble position (U34) in tRNA. Catalyzes the FAD-dependent demodification of cmnm(5)s(2)U34 to nm(5)s(2)U34, followed by the transfer of a methyl group from S-adenosyl-L-methionine to nm(5)s(2)U34, to form mnm(5)s(2)U34. In Pseudomonas paraeruginosa (strain DSM 24068 / PA7) (Pseudomonas aeruginosa (strain PA7)), this protein is tRNA 5-methylaminomethyl-2-thiouridine biosynthesis bifunctional protein MnmC.